The sequence spans 277 residues: Large ribosomal subunit protein uL2 (277 aa).

2 disordered regions span residues 37 to 60 and 223 to 265; these read KNSTAGRNNNGHITTRHKGGGHKH and VVMN…KRTD. Residues 39–49 are compositionally biased toward polar residues; the sequence is STAGRNNNGHI. Over residues 50 to 60 the composition is skewed to basic residues; sequence TTRHKGGGHKH. Residues 229 to 244 are compositionally biased toward basic and acidic residues; it reads DHPHGGGEGRTGEARE.

This sequence belongs to the universal ribosomal protein uL2 family. Part of the 50S ribosomal subunit. Forms a bridge to the 30S subunit in the 70S ribosome.

In terms of biological role, one of the primary rRNA binding proteins. Required for association of the 30S and 50S subunits to form the 70S ribosome, for tRNA binding and peptide bond formation. It has been suggested to have peptidyltransferase activity; this is somewhat controversial. Makes several contacts with the 16S rRNA in the 70S ribosome. In Neisseria meningitidis serogroup A / serotype 4A (strain DSM 15465 / Z2491), this protein is Large ribosomal subunit protein uL2.